Here is a 145-residue protein sequence, read N- to C-terminus: D-aminoacyl-tRNA deacylase (145 aa).

Positions 137–138 match the Gly-cisPro motif, important for rejection of L-amino acids motif; the sequence is GP.

It belongs to the DTD family. As to quaternary structure, homodimer.

It is found in the cytoplasm. It carries out the reaction glycyl-tRNA(Ala) + H2O = tRNA(Ala) + glycine + H(+). The enzyme catalyses a D-aminoacyl-tRNA + H2O = a tRNA + a D-alpha-amino acid + H(+). Its function is as follows. An aminoacyl-tRNA editing enzyme that deacylates mischarged D-aminoacyl-tRNAs. Also deacylates mischarged glycyl-tRNA(Ala), protecting cells against glycine mischarging by AlaRS. Acts via tRNA-based rather than protein-based catalysis; rejects L-amino acids rather than detecting D-amino acids in the active site. By recycling D-aminoacyl-tRNA to D-amino acids and free tRNA molecules, this enzyme counteracts the toxicity associated with the formation of D-aminoacyl-tRNA entities in vivo and helps enforce protein L-homochirality. The protein is D-aminoacyl-tRNA deacylase of Lactobacillus acidophilus (strain ATCC 700396 / NCK56 / N2 / NCFM).